A 591-amino-acid chain; its full sequence is Probable translation initiation factor IF-2 (591 aa).

The tr-type G domain maps to 7-223 (LRTPIVCVMG…LLGLAQKFLE (217 aa)). Residues 16–23 (GHVDHGKT) are G1. 16–23 (GHVDHGKT) provides a ligand contact to GTP. Positions 41 to 45 (AITQH) are G2. Residues 78-81 (DTPG) are G3. GTP is bound by residues 78–82 (DTPGH) and 132–135 (NKID). The G4 stretch occupies residues 132–135 (NKID). The segment at 200 to 202 (SAF) is G5.

The protein belongs to the TRAFAC class translation factor GTPase superfamily. Classic translation factor GTPase family. IF-2 subfamily.

Functionally, function in general translation initiation by promoting the binding of the formylmethionine-tRNA to ribosomes. Seems to function along with eIF-2. The chain is Probable translation initiation factor IF-2 from Methanosarcina mazei (strain ATCC BAA-159 / DSM 3647 / Goe1 / Go1 / JCM 11833 / OCM 88) (Methanosarcina frisia).